The chain runs to 353 residues: Methylthioribose-1-phosphate isomerase (353 aa).

Residues 51–53 (RGA), Arg-94, and Gln-203 each bind substrate. Asp-244 functions as the Proton donor in the catalytic mechanism. 254–255 (NK) lines the substrate pocket.

It belongs to the eIF-2B alpha/beta/delta subunits family. MtnA subfamily.

The catalysed reaction is 5-(methylsulfanyl)-alpha-D-ribose 1-phosphate = 5-(methylsulfanyl)-D-ribulose 1-phosphate. The protein operates within amino-acid biosynthesis; L-methionine biosynthesis via salvage pathway; L-methionine from S-methyl-5-thio-alpha-D-ribose 1-phosphate: step 1/6. Functionally, catalyzes the interconversion of methylthioribose-1-phosphate (MTR-1-P) into methylthioribulose-1-phosphate (MTRu-1-P). The sequence is that of Methylthioribose-1-phosphate isomerase from Trichodesmium erythraeum (strain IMS101).